A 227-amino-acid polypeptide reads, in one-letter code: PKHD-type hydroxylase Bcep18194_B0892 (227 aa).

Residues 78–178 (KVFPPLFNRY…RVASFFWIQS (101 aa)) enclose the Fe2OG dioxygenase domain. Fe cation is bound by residues histidine 96, aspartate 98, and histidine 159. Arginine 169 contributes to the 2-oxoglutarate binding site.

Fe(2+) serves as cofactor. The cofactor is L-ascorbate.

The sequence is that of PKHD-type hydroxylase Bcep18194_B0892 from Burkholderia lata (strain ATCC 17760 / DSM 23089 / LMG 22485 / NCIMB 9086 / R18194 / 383).